Consider the following 150-residue polypeptide: Transcription antitermination protein NusB (150 aa).

The protein belongs to the NusB family.

Its function is as follows. Involved in transcription antitermination. Required for transcription of ribosomal RNA (rRNA) genes. Binds specifically to the boxA antiterminator sequence of the ribosomal RNA (rrn) operons. This Streptococcus pyogenes serotype M4 (strain MGAS10750) protein is Transcription antitermination protein NusB.